We begin with the raw amino-acid sequence, 100 residues long: Large ribosomal subunit protein eL30 (100 aa).

It belongs to the eukaryotic ribosomal protein eL30 family.

The sequence is that of Large ribosomal subunit protein eL30 from Thermococcus sibiricus (strain DSM 12597 / MM 739).